The following is an 829-amino-acid chain: FAST kinase domain-containing protein 1, mitochondrial (829 aa).

Lys-346 bears the N6-acetyllysine mark. The 61-residue stretch at 761-821 folds into the RAP domain; it reads IAIELLDVRA…KDARMDYLRE (61 aa).

The protein belongs to the FAST kinase family. As to expression, expression detected in spleen, testis, colon, heart, smooth muscle, kidney, brain, lung, liver, brown and white adipose tissue with highest expression in heart and brown adipose tissue.

It is found in the mitochondrion. Involved in the down-regulation of mitochondrial MT-ND3 mRNA levels which leads to decreased respiratory complex I abundance and activity. In Mus musculus (Mouse), this protein is FAST kinase domain-containing protein 1, mitochondrial (Fastkd1).